Consider the following 354-residue polypeptide: 3-isopropylmalate dehydrogenase (354 aa).

Residue 76-87 (GPRWDSAKERPE) coordinates NAD(+). Residues Arg94, Arg104, Arg130, and Asp215 each coordinate substrate. 3 residues coordinate Mg(2+): Asp215, Asp239, and Asp243. An NAD(+)-binding site is contributed by 273 to 285 (GSAPDIAGKNKAN).

The protein belongs to the isocitrate and isopropylmalate dehydrogenases family. LeuB type 1 subfamily. Homodimer. The cofactor is Mg(2+). Mn(2+) is required as a cofactor.

It is found in the cytoplasm. It carries out the reaction (2R,3S)-3-isopropylmalate + NAD(+) = 4-methyl-2-oxopentanoate + CO2 + NADH. It participates in amino-acid biosynthesis; L-leucine biosynthesis; L-leucine from 3-methyl-2-oxobutanoate: step 3/4. In terms of biological role, catalyzes the oxidation of 3-carboxy-2-hydroxy-4-methylpentanoate (3-isopropylmalate) to 3-carboxy-4-methyl-2-oxopentanoate. The product decarboxylates to 4-methyl-2 oxopentanoate. The polypeptide is 3-isopropylmalate dehydrogenase (Bacillus cereus (strain ATCC 10987 / NRS 248)).